The following is a 128-amino-acid chain: NHP2-like protein 1 (128 aa).

The tract at residues 36-48 (RKGANEATKTLNR) is interaction with U4 snRNA and U4atac snRNA. The important for U4 snRNA-binding stretch occupies residues 96 to 128 (SRPVIACSVTIKEGSQLKPQIQSVQQAIERLLV).

It belongs to the eukaryotic ribosomal protein eL8 family. Identified in the spliceosome B complex. Component of the U4/U6-U5 tri-snRNP complex. Part of the small subunit (SSU) processome, composed of more than 70 proteins and the RNA chaperone small nucleolar RNA (snoRNA) U3.

It is found in the nucleus. The protein resides in the nucleolus. Part of the small subunit (SSU) processome, first precursor of the small eukaryotic ribosomal subunit. During the assembly of the SSU processome in the nucleolus, many ribosome biogenesis factors, an RNA chaperone and ribosomal proteins associate with the nascent pre-rRNA and work in concert to generate RNA folding, modifications, rearrangements and cleavage as well as targeted degradation of pre-ribosomal RNA by the RNA exosome. Involved in pre-mRNA splicing as component of the spliceosome. Binds to the 5'-stem-loop of U4 snRNA and thereby contributes to spliceosome assembly. The protein undergoes a conformational change upon RNA-binding. Core component of box C/D small nucleolar ribonucleoprotein (snoRNP) complexes that function in methylation of multiple sites on ribosomal RNAs (rRNAs) and messenger RNAs (mRNAs). In Xenopus laevis (African clawed frog), this protein is NHP2-like protein 1.